The primary structure comprises 307 residues: Transcriptional repressor scratch 2 (307 aa).

The SNAG domain stretch occupies residues 1 to 20; sequence MPRSFLVKKIKGDGFQCSGV. Disordered regions lie at residues 34–90 and 116–148; these read LPGA…PQSS and GRSR…AGAQ. Positions 124–148 are enriched in gly residues; the sequence is GGGGDAGGSGDAGGAGGRAGRAGAQ. 4 C2H2-type zinc fingers span residues 155-177, 186-208, 212-234, and 240-262; these read HACA…KQTH, RKCP…LLTH, HKCG…MRSH, and FGCA…MQTH. The segment at 268-291 adopts a C2H2-type 5; atypical zinc-finger fold; sequence YRCRQCDKSFALKSYLHKHCEAAC.

Belongs to the snail C2H2-type zinc-finger protein family.

Its subcellular location is the nucleus. In terms of biological role, may be involved in transcriptional regulation. The polypeptide is Transcriptional repressor scratch 2 (SCRT2) (Homo sapiens (Human)).